Consider the following 487-residue polypeptide: Kynureninase 1 (487 aa).

Pyridoxal 5'-phosphate-binding positions include L149, T150, 177–180, S234, D263, H266, and Y288; that span reads FPSD. K289 is subject to N6-(pyridoxal phosphate)lysine. Pyridoxal 5'-phosphate is bound by residues W329 and N357.

Belongs to the kynureninase family. In terms of assembly, homodimer. Pyridoxal 5'-phosphate is required as a cofactor.

It is found in the cytoplasm. The enzyme catalyses L-kynurenine + H2O = anthranilate + L-alanine + H(+). The catalysed reaction is 3-hydroxy-L-kynurenine + H2O = 3-hydroxyanthranilate + L-alanine + H(+). It participates in amino-acid degradation; L-kynurenine degradation; L-alanine and anthranilate from L-kynurenine: step 1/1. It functions in the pathway cofactor biosynthesis; NAD(+) biosynthesis; quinolinate from L-kynurenine: step 2/3. In terms of biological role, catalyzes the cleavage of L-kynurenine (L-Kyn) and L-3-hydroxykynurenine (L-3OHKyn) into anthranilic acid (AA) and 3-hydroxyanthranilic acid (3-OHAA), respectively. The protein is Kynureninase 1 (bna5-1) of Emericella nidulans (strain FGSC A4 / ATCC 38163 / CBS 112.46 / NRRL 194 / M139) (Aspergillus nidulans).